The primary structure comprises 348 residues: Protein RecA (348 aa).

69-76 (GPESSGKT) is a binding site for ATP.

The protein belongs to the RecA family.

The protein resides in the cytoplasm. Functionally, can catalyze the hydrolysis of ATP in the presence of single-stranded DNA, the ATP-dependent uptake of single-stranded DNA by duplex DNA, and the ATP-dependent hybridization of homologous single-stranded DNAs. It interacts with LexA causing its activation and leading to its autocatalytic cleavage. In Picosynechococcus sp. (strain ATCC 27264 / PCC 7002 / PR-6) (Agmenellum quadruplicatum), this protein is Protein RecA.